Here is a 258-residue protein sequence, read N- to C-terminus: Snake venom serine protease PTLE1 (258 aa).

Positions 1-18 (MVLIRVLANLLILQLSYA) are cleaved as a signal peptide. Residues 19–24 (QKSSEL) constitute a propeptide that is removed on maturation. The Peptidase S1 domain occupies 25–249 (VIGGDECNIN…YTDWIENIIA (225 aa)). 6 disulfide bridges follow: C31–C163, C50–C66, C98–C256, C142–C210, C174–C189, and C200–C225. N44 is a glycosylation site (N-linked (GlcNAc...) asparagine). The active-site Charge relay system is the H65. N-linked (GlcNAc...) asparagine glycans are attached at residues N79 and N103. D110 acts as the Charge relay system in catalysis. N121 carries an N-linked (GlcNAc...) asparagine glycan. S204 functions as the Charge relay system in the catalytic mechanism.

Belongs to the peptidase S1 family. Snake venom subfamily. In terms of assembly, monomer. Expressed by the venom gland.

Its subcellular location is the secreted. In terms of biological role, snake venom serine protease that may act in the hemostasis system of the prey. The polypeptide is Snake venom serine protease PTLE1 (Gloydius halys (Chinese water mocassin)).